Here is a 308-residue protein sequence, read N- to C-terminus: Coenzyme PQQ synthesis protein B (308 aa).

The protein belongs to the PqqB family.

The protein operates within cofactor biosynthesis; pyrroloquinoline quinone biosynthesis. In terms of biological role, may be involved in the transport of PQQ or its precursor to the periplasm. This Rhodopseudomonas palustris (strain BisB5) protein is Coenzyme PQQ synthesis protein B.